The primary structure comprises 470 residues: Membrane-bound lytic murein transglycosylase F (470 aa).

The first 21 residues, 1–21 (MLKEKLIIIITLVMLLCACDI), serve as a signal peptide directing secretion. The non-LT domain stretch occupies residues 22-259 (QEQSTQLAQI…VLEEKYFGHV (238 aa)). Positions 260-470 (RQFNYVNTLA…PKIGDEVEAK (211 aa)) are LT domain. The active site involves glutamate 304.

This sequence in the N-terminal section; belongs to the bacterial solute-binding protein 3 family. The protein in the C-terminal section; belongs to the transglycosylase Slt family.

The protein localises to the cell outer membrane. It carries out the reaction Exolytic cleavage of the (1-&gt;4)-beta-glycosidic linkage between N-acetylmuramic acid (MurNAc) and N-acetylglucosamine (GlcNAc) residues in peptidoglycan, from either the reducing or the non-reducing ends of the peptidoglycan chains, with concomitant formation of a 1,6-anhydrobond in the MurNAc residue.. In terms of biological role, murein-degrading enzyme that degrades murein glycan strands and insoluble, high-molecular weight murein sacculi, with the concomitant formation of a 1,6-anhydromuramoyl product. Lytic transglycosylases (LTs) play an integral role in the metabolism of the peptidoglycan (PG) sacculus. Their lytic action creates space within the PG sacculus to allow for its expansion as well as for the insertion of various structures such as secretion systems and flagella. The polypeptide is Membrane-bound lytic murein transglycosylase F (Pseudoalteromonas translucida (strain TAC 125)).